We begin with the raw amino-acid sequence, 355 residues long: Elongation factor Ts (355 aa).

The segment at 82-85 (TDFV) is involved in Mg(2+) ion dislocation from EF-Tu.

It belongs to the EF-Ts family.

The protein resides in the cytoplasm. Associates with the EF-Tu.GDP complex and induces the exchange of GDP to GTP. It remains bound to the aminoacyl-tRNA.EF-Tu.GTP complex up to the GTP hydrolysis stage on the ribosome. The polypeptide is Elongation factor Ts (Helicobacter pylori (strain P12)).